A 1128-amino-acid polypeptide reads, in one-letter code: MSRSVLQPSQQKLAEKLTILNDRGVGMLTRLYNIKKACGDPKAKPSYLIDKNLESAVKFIVRKFPAVETRNNNQQLAQLQKEKSEILKNLALYYFTFVDVMEFKDHVCELLNTIDVCQVFLDITVNFDLTKNYLDLIVTYTTLMIMLSRIEERKAIIGLYNYSHEMTHGASDREYPRLGQMIVDYENPLKKMMEEFVPHSKSLSDALISLQMVYPRRNLSAEQWRNAQLLSLISAPSTMLNPAQSDTMPCEYLSLDTMEKWIILGFILCHGILNTDATSLNLWKLALQSSSCICLYRDEVLHFHKAAEDLFVNIRGYNKRINDIRECKENAVSHAGATHRERRKFLRSALKELATVLSDQPGLLGPKALFVFMALSFARDEIIWLLRHADNIPKKIADDFMDKHIAELIFYMEELRAHVRKYGPVMQRYYVQYLSGFDAVVLNELVQNLSVCPEDESIIMSSFVNTMTSLSVKQVEDGEVFDFRGMRLDWFRLQAYTSVSKASLSLTDHRELGKMMNTIIFHTKMVDSLVEMLVETSDLSIFCFYSRAFEKMFQQCLELPSQSRYSISFPLLCTHFMSCTHELCPEERHHIGDRSLSLCNMFLDEMAKQARNLITDICTEQCTLSDQLLPKHCAKTISQAVNKKSKKQTGKKGEPEREKPGVESMRKNRLVVTNLDKLHTALSELCFSINYAPNMVVWEHTFTPREYLTSHLEIRFTKSIVGMTMYNQVTQEIAKPSELLTSVRAYMTVLQSIENYVQIDITRVFNNVLLQQTQHLDSHGEPTITSLYTNWYLETLLRQVSNGHIAYFPAMKAFVNLPTENELTFNAEEYSDISEMRALSELLGPYGMKFLSESLMWHISSQVAELKKLVVENVEVLTQMRTSFDKPEQMAAFFKRLTSVDSVLKRMTIIGVILSFRSLAQEALKDVLSYHIPFLVSSVEDFKDHIPRETDMKVAMNVYELSSAAGLPCEIDPALVVALSSQKSETISPEEEYKIACLLMVFVAVSLPTLASNVMSQYSPAIEGHCNNIHCLAKAINQIAAALFTIHKGSIEDRLKEFLALASSSLLKIGQETDKTTTRNRESVYLLLDMIVQESPFLTMDLLESCFPYVLLRNAYHAVYKQSVTSSS.

The tract at residues 640–665 is disordered; that stretch reads AVNKKSKKQTGKKGEPEREKPGVESM. Over residues 651–665 the composition is skewed to basic and acidic residues; sequence KKGEPEREKPGVESM. The helical transmembrane segment at 995 to 1015 threads the bilayer; it reads IACLLMVFVAVSLPTLASNVM.

It belongs to the HEM-1/HEM-2 family.

The protein resides in the cell membrane. It localises to the cell projection. The protein localises to the lamellipodium membrane. In terms of biological role, part of the WAVE complex that regulates lamellipodia formation. The WAVE complex regulates actin filament reorganization via its interaction with the Arp2/3 complex. Actin remodeling activity is regulated by RAC1. Plays a role in neural tube closure. The polypeptide is Nck-associated protein 1 (nckap1) (Xenopus laevis (African clawed frog)).